Here is a 474-residue protein sequence, read N- to C-terminus: Cbb3-type cytochrome c oxidase subunit CcoN1 (474 aa).

Residues 1 to 16 lie on the Cytoplasmic side of the membrane; sequence MNTATSTAYSYKVVRQ. The helical transmembrane segment at 17–37 threads the bilayer; sequence FAIMTVVWGIVGMGLGVFIAA. The Periplasmic segment spans residues 38–60; it reads QLAWPFLNFDLPWTSFGRLRPLH. Histidine 60 provides a ligand contact to heme b. A helical transmembrane segment spans residues 61–81; that stretch reads TNAVIFAFGGCALFATSYYSV. The Cytoplasmic portion of the chain corresponds to 82–96; sequence QRTCQTTLFAPKLAA. Residues 97 to 117 traverse the membrane as a helical segment; the sequence is FTFWGWQLVILLAAISLPLGF. Residues 118–129 lie on the Periplasmic side of the membrane; that stretch reads TSSKEYAELEWP. A helical membrane pass occupies residues 130–150; it reads IDILITIVWVAYAVVFFGTLA. The Cytoplasmic portion of the chain corresponds to 151–156; that stretch reads KRKVKH. A helical transmembrane segment spans residues 157–177; sequence IYVGNWFFGAFILTVAILHVV. Residues 178-205 are Periplasmic-facing; that stretch reads NNLEIPVTAMKSYSLYAGATDAMVQWWY. A helical membrane pass occupies residues 206 to 226; the sequence is GHNAVGFFLTAGFLGIMYYFV. A Cu cation-binding site is contributed by histidine 207. Over 227–238 the chain is Cytoplasmic; sequence PKQAERPVYSYR. The helical transmembrane segment at 239 to 259 threads the bilayer; sequence LSIVHFWALITVYIWAGPHHL. Residues histidine 257 and histidine 258 each coordinate Cu cation. The Periplasmic portion of the chain corresponds to 260–270; the sequence is HYTALPDWAQS. The chain crosses the membrane as a helical span at residues 271 to 291; the sequence is LGMVMSLILLAPSWGGMINGM. Over 292–308 the chain is Cytoplasmic; sequence MTLSGAWHKLRSDPILR. The helical transmembrane segment at 309 to 329 threads the bilayer; that stretch reads FLVVSLAFYGMSTFEGPMMAI. Residues 330–345 are Periplasmic-facing; that stretch reads KTVNALSHYTDWTIGH. Histidine 345 and histidine 347 together coordinate heme b. Residues 346–366 form a helical membrane-spanning segment; it reads VHAGALGWVAMVSIGALYHLV. At 367–384 the chain is on the cytoplasmic side; sequence PKVFGREQMHSIGLINTH. Residues 385 to 405 traverse the membrane as a helical segment; that stretch reads FWLATIGTVLYIASMWVNGIA. Over 406–432 the chain is Periplasmic; the sequence is QGLMWRAINDDGTLTYSFVESLEASHP. A helical transmembrane segment spans residues 433 to 453; sequence GFVVRMIGGAIFFAGMLVMAY. The Cytoplasmic segment spans residues 454 to 474; that stretch reads NTWRTVQAAKPAEYDAAAQIA.

The protein belongs to the heme-copper respiratory oxidase family. As to quaternary structure, component of the cbb3-type cytochrome c oxidase at least composed of CcoN, CcoO, CcoQ and CcoP. It depends on Cu(2+) as a cofactor. Heme b serves as cofactor.

It localises to the cell inner membrane. It carries out the reaction 4 Fe(II)-[cytochrome c] + O2 + 8 H(+)(in) = 4 Fe(III)-[cytochrome c] + 2 H2O + 4 H(+)(out). It participates in energy metabolism; oxidative phosphorylation. Functionally, cbb3-type cytochrome c oxidase is the component of the respiratory chain that catalyzes the reduction of oxygen to water. Subunits CcoN and CcoO form the functional core of the enzyme complex. Subunits CcoP and CcoQ may optionally bind to the core. CcoN is the catalytic subunit of the enzyme. Electrons originating in cytochrome c or a quinol are transferred to the bimetallic center formed by a high-spin heme and copper B. The complex also functions as a proton pump. The protein is Cbb3-type cytochrome c oxidase subunit CcoN1 of Stutzerimonas stutzeri (Pseudomonas stutzeri).